The primary structure comprises 352 residues: tRNA(Ile)-lysidine synthase (352 aa).

58–63 contacts ATP; it reads SGGADS.

This sequence belongs to the tRNA(Ile)-lysidine synthase family.

The protein resides in the cytoplasm. The catalysed reaction is cytidine(34) in tRNA(Ile2) + L-lysine + ATP = lysidine(34) in tRNA(Ile2) + AMP + diphosphate + H(+). Functionally, ligates lysine onto the cytidine present at position 34 of the AUA codon-specific tRNA(Ile) that contains the anticodon CAU, in an ATP-dependent manner. Cytidine is converted to lysidine, thus changing the amino acid specificity of the tRNA from methionine to isoleucine. The protein is tRNA(Ile)-lysidine synthase of Streptomyces coelicolor (strain ATCC BAA-471 / A3(2) / M145).